We begin with the raw amino-acid sequence, 275 residues long: Testis-specific gene 13 protein (275 aa).

The segment covering 1–20 (MSQKRQTKFQNGKSKTSENS) has biased composition (polar residues). A disordered region spans residues 1–28 (MSQKRQTKFQNGKSKTSENSSAKREKGM).

Testis-specific.

The sequence is that of Testis-specific gene 13 protein (TSGA13) from Homo sapiens (Human).